Here is a 212-residue protein sequence, read N- to C-terminus: uncharacterized protein (212 aa).

This is an uncharacterized protein from Mycobacterium tuberculosis (strain ATCC 25618 / H37Rv).